Consider the following 320-residue polypeptide: Cytochrome f (320 aa).

Positions 1–35 are cleaved as a signal peptide; sequence MQTRNAFSWLKKQITRSISVSLMIYILTRTSISSA. Residues Tyr-36, Cys-56, Cys-59, and His-60 each coordinate heme. Residues 286–306 form a helical membrane-spanning segment; sequence AQGLLFFLASVILAQIFLVLK.

The protein belongs to the cytochrome f family. In terms of assembly, the 4 large subunits of the cytochrome b6-f complex are cytochrome b6, subunit IV (17 kDa polypeptide, petD), cytochrome f and the Rieske protein, while the 4 small subunits are PetG, PetL, PetM and PetN. The complex functions as a dimer. The cofactor is heme.

Its subcellular location is the plastid. It localises to the chloroplast thylakoid membrane. Its function is as follows. Component of the cytochrome b6-f complex, which mediates electron transfer between photosystem II (PSII) and photosystem I (PSI), cyclic electron flow around PSI, and state transitions. The protein is Cytochrome f of Nicotiana tomentosiformis (Tobacco).